Consider the following 457-residue polypeptide: Phosphomethylpyrimidine synthase (457 aa).

Substrate is bound by residues asparagine 80, methionine 109, tyrosine 139, histidine 175, 195-197 (SRG), 236-239 (DSLR), and glutamate 275. Histidine 279 is a Zn(2+) binding site. Tyrosine 302 is a substrate binding site. Residue histidine 343 coordinates Zn(2+). [4Fe-4S] cluster is bound by residues cysteine 423, cysteine 426, and cysteine 431.

This sequence belongs to the ThiC family. [4Fe-4S] cluster serves as cofactor.

It carries out the reaction 5-amino-1-(5-phospho-beta-D-ribosyl)imidazole + S-adenosyl-L-methionine = 4-amino-2-methyl-5-(phosphooxymethyl)pyrimidine + CO + 5'-deoxyadenosine + formate + L-methionine + 3 H(+). It functions in the pathway cofactor biosynthesis; thiamine diphosphate biosynthesis. Catalyzes the synthesis of the hydroxymethylpyrimidine phosphate (HMP-P) moiety of thiamine from aminoimidazole ribotide (AIR) in a radical S-adenosyl-L-methionine (SAM)-dependent reaction. In Nostoc sp. (strain PCC 7120 / SAG 25.82 / UTEX 2576), this protein is Phosphomethylpyrimidine synthase.